The primary structure comprises 728 residues: Methylmalonyl-CoA mutase large subunit (728 aa).

(R)-methylmalonyl-CoA contacts are provided by Tyr75, Met78, Arg82, Thr85, Arg87, Tyr89, and Ser114. Cob(II)alamin contacts are provided by Phe117 and Ala139. (R)-methylmalonyl-CoA contacts are provided by Thr195 and Gln197. Residues Val206 and Arg207 each coordinate cob(II)alamin. Arg207, His244, Arg283, and Ser285 together coordinate (R)-methylmalonyl-CoA. Cob(II)alamin-binding residues include Gly333, Glu370, Ala373, Gly609, His610, Asp611, Arg612, Ser655, Leu657, Gly686, and Thr709. The 132-residue stretch at 597-728 (RPRILLAKMG…VKKLRASLDA (132 aa)) folds into the B12-binding domain.

The protein belongs to the methylmalonyl-CoA mutase family. In terms of assembly, heterodimer of an alpha and a beta chain. Adenosylcob(III)alamin is required as a cofactor.

It catalyses the reaction (R)-methylmalonyl-CoA = succinyl-CoA. Functionally, catalyzes the reversible conversion of succinyl-CoA to (R)-methylmalonyl-CoA through a radical mechanism. Is involved in the fermentation of pyruvate to propanoate that occurs in Propionibacteria. The protein is Methylmalonyl-CoA mutase large subunit (mutB) of Propionibacterium freudenreichii subsp. shermanii.